A 330-amino-acid chain; its full sequence is SUMO-activating enzyme subunit 1 (330 aa).

Belongs to the ubiquitin-activating E1 family. As to quaternary structure, heterodimer of sae1 and sae2. The complex binds sumo via sae2.

Its subcellular location is the nucleus. It participates in protein modification; protein sumoylation. In terms of biological role, the dimeric enzyme acts as an E1 ligase for sumo. It mediates ATP-dependent activation of sumo and formation of a thioester with a conserved cysteine residue on sae2. This is SUMO-activating enzyme subunit 1 (sae1) from Dictyostelium discoideum (Social amoeba).